Consider the following 158-residue polypeptide: Phospholipase A2 AP-PLA2-II (158 aa).

Positions 1-16 (MKTFLILAMAVALAKA) are cleaved as a signal peptide. The propeptide occupies 17–23 (QSTDEIT). Disulfide bonds link Cys51/Cys158, Cys53/Cys69, Cys68/Cys138, Cys75/Cys131, Cys85/Cys124, and Cys109/Cys129. The Ca(2+) site is built by Gly54 and Gly56. His72 is a catalytic residue. Asp73 is a Ca(2+) binding site. Asp132 is a catalytic residue.

It belongs to the phospholipase A2 family. Group I subfamily. In terms of assembly, monomer. Ca(2+) is required as a cofactor. Expressed by the venom gland.

The protein resides in the secreted. It catalyses the reaction a 1,2-diacyl-sn-glycero-3-phosphocholine + H2O = a 1-acyl-sn-glycero-3-phosphocholine + a fatty acid + H(+). Its function is as follows. Starfish phospholipase A2 (PLA2) that has hemorrhagic and capillary permeability-increasing activities and hence is considered to be deeply involved in the local inflammation. Shows hemolytic activity only in the presence of phosphatidylcholine (PC). PLA2 catalyzes the calcium-dependent hydrolysis of the 2-acyl groups in 3-sn-phosphoglycerides. The chain is Phospholipase A2 AP-PLA2-II from Acanthaster planci (Crown-of-thorns starfish).